The primary structure comprises 87 residues: Probable Fe(2+)-trafficking protein (87 aa).

This sequence belongs to the Fe(2+)-trafficking protein family.

Could be a mediator in iron transactions between iron acquisition and iron-requiring processes, such as synthesis and/or repair of Fe-S clusters in biosynthetic enzymes. This is Probable Fe(2+)-trafficking protein from Francisella tularensis subsp. novicida (strain U112).